A 135-amino-acid chain; its full sequence is Mediator of RNA polymerase II transcription subunit 10 (135 aa).

This sequence belongs to the Mediator complex subunit 10 family. In terms of assembly, component of the Mediator complex, which is composed of MED1, MED4, MED6, MED7, MED8, MED9, MED10, MED11, MED12, MED13, MED13L, MED14, MED15, MED16, MED17, MED18, MED19, MED20, MED21, MED22, MED23, MED24, MED25, MED26, MED27, MED29, MED30, MED31, CCNC, CDK8 and CDC2L6/CDK11. The MED12, MED13, CCNC and CDK8 subunits form a distinct module termed the CDK8 module. Mediator containing the CDK8 module is less active than Mediator lacking this module in supporting transcriptional activation. Individual preparations of the Mediator complex lacking one or more distinct subunits have been variously termed ARC, CRSP, DRIP, PC2, SMCC and TRAP.

It localises to the nucleus. Its function is as follows. Component of the Mediator complex, a coactivator involved in the regulated transcription of nearly all RNA polymerase II-dependent genes. Mediator functions as a bridge to convey information from gene-specific regulatory proteins to the basal RNA polymerase II transcription machinery. Mediator is recruited to promoters by direct interactions with regulatory proteins and serves as a scaffold for the assembly of a functional preinitiation complex with RNA polymerase II and the general transcription factors. The sequence is that of Mediator of RNA polymerase II transcription subunit 10 (MED10) from Macaca fascicularis (Crab-eating macaque).